The sequence spans 300 residues: uncharacterized protein (300 aa).

Ser49 functions as the Charge relay system in the catalytic mechanism. The active-site Proton donor is the Tyr137. Catalysis depends on Lys165, which acts as the Schiff-base intermediate with substrate.

Belongs to the DapA family. In terms of assembly, homotetramer.

It is found in the cytoplasm. Upon expression in E.coli complements a dapA deletion mutation, but this may not be its physiological function. This is an uncharacterized protein from Rhizobium meliloti (Ensifer meliloti).